A 98-amino-acid chain; its full sequence is UPF0251 protein Sputcn32_0687 (98 aa).

The protein belongs to the UPF0251 family.

The polypeptide is UPF0251 protein Sputcn32_0687 (Shewanella putrefaciens (strain CN-32 / ATCC BAA-453)).